An 89-amino-acid polypeptide reads, in one-letter code: Bacterial microcompartment shell vertex protein GrpN (89 aa).

One can recognise a BMV domain in the interval 1 to 83; sequence MYLGKVIGTV…IDAAVVGIVD (83 aa).

Belongs to the CcmL/EutN family. In terms of assembly, homopentamer with a small central pore.

The protein localises to the bacterial microcompartment. Its function is as follows. Probably forms vertices in the bacterial microcompartment (BMC) predicted to be involved in glycyl radical-based 1,2-propanediol metabolism in this organism. The sequence is that of Bacterial microcompartment shell vertex protein GrpN from Rhodospirillum rubrum (strain F11).